The primary structure comprises 330 residues: Beta-ketoacyl-[acyl-carrier-protein] synthase III (330 aa).

Residues cysteine 111 and histidine 249 contribute to the active site. The segment at 250–254 (QANTR) is ACP-binding. Asparagine 279 is an active-site residue.

It belongs to the thiolase-like superfamily. FabH family. Homodimer.

It localises to the cytoplasm. It carries out the reaction malonyl-[ACP] + acetyl-CoA + H(+) = 3-oxobutanoyl-[ACP] + CO2 + CoA. It participates in lipid metabolism; fatty acid biosynthesis. Catalyzes the condensation reaction of fatty acid synthesis by the addition to an acyl acceptor of two carbons from malonyl-ACP. Catalyzes the first condensation reaction which initiates fatty acid synthesis and may therefore play a role in governing the total rate of fatty acid production. Possesses both acetoacetyl-ACP synthase and acetyl transacylase activities. Its substrate specificity determines the biosynthesis of branched-chain and/or straight-chain of fatty acids. In Pseudomonas aeruginosa (strain LESB58), this protein is Beta-ketoacyl-[acyl-carrier-protein] synthase III.